A 360-amino-acid chain; its full sequence is Phosphate acyltransferase (360 aa).

It belongs to the PlsX family. Homodimer. Probably interacts with PlsY.

It is found in the cytoplasm. It catalyses the reaction a fatty acyl-[ACP] + phosphate = an acyl phosphate + holo-[ACP]. Its pathway is lipid metabolism; phospholipid metabolism. Functionally, catalyzes the reversible formation of acyl-phosphate (acyl-PO(4)) from acyl-[acyl-carrier-protein] (acyl-ACP). This enzyme utilizes acyl-ACP as fatty acyl donor, but not acyl-CoA. The polypeptide is Phosphate acyltransferase (Thermobifida fusca (strain YX)).